The primary structure comprises 252 residues: Mitochondrial intermembrane space import and assembly protein 40 (252 aa).

The N-terminal 31 residues, 1–31 (MYRTISRSSSGLIRQSTARLTRQLSTTRTTP), are a transit peptide targeting the mitochondrion. At 32 to 37 (SQYNSK) the chain is on the mitochondrial matrix side. A helical; Signal-anchor for type II membrane protein transmembrane segment spans residues 38–54 (LLLGVLGTGALAFGYFS). The Mitochondrial intermembrane portion of the chain corresponds to 55-252 (QQSSLIQNAS…DKVKPNTKSD (198 aa)). Over residues 90-123 (RQEKVIKENEQKTKKAEDAKTSSESKANVADKKS) the composition is skewed to basic and acidic residues. Positions 90–143 (RQEKVIKENEQKTKKAEDAKTSSESKANVADKKSNSQPEGEPEGEGKQEAAFNP) are disordered. Cystine bridges form between Cys152–Cys154, Cys163–Cys196, and Cys173–Cys186. A CHCH domain is found at 160-204 (HGPCGEEFKEAFSCFVFSETEPKGIDCIKKFENMRSCFKRYPEHY). 2 consecutive short sequence motifs (cx9C motif) follow at residues 163–173 (CGEEFKEAFSC) and 186–196 (CIKKFENMRSC). The segment at 230-252 (EPAIEQIEQGIKEDKVKPNTKSD) is disordered. Residues 239 to 252 (GIKEDKVKPNTKSD) show a composition bias toward basic and acidic residues.

As to quaternary structure, monomer. Cu(2+) is required as a cofactor. The cofactor is Zn(2+).

It is found in the mitochondrion inner membrane. Functionally, required for the import and folding of small cysteine-containing proteins (small Tim) in the mitochondrial intermembrane space (IMS). Forms a redox cycle with ERV1 that involves a disulfide relay system. Precursor proteins to be imported into the IMS are translocated in their reduced form into the mitochondria. The oxidized form of MIA40 forms a transient intermolecular disulfide bridge with the reduced precursor protein, resulting in oxidation of the precursor protein that now contains an intramolecular disulfide bond and is able to undergo folding in the IMS. This chain is Mitochondrial intermembrane space import and assembly protein 40 (MIA40), found in Candida albicans (strain SC5314 / ATCC MYA-2876) (Yeast).